The primary structure comprises 340 residues: GTPase Obg (340 aa).

An Obg domain is found at 1–158 (MSFIDEAKVY…KYITLKLKII (158 aa)). Positions 159–325 (SDIGIIGLPN…LSTLIQYIHK (167 aa)) constitute an OBG-type G domain. GTP contacts are provided by residues 165–172 (GLPNAGKS), 190–194 (FTTLE), 211–214 (DIPG), 278–281 (NKSD), and 306–308 (SSI). Mg(2+) is bound by residues serine 172 and threonine 192.

This sequence belongs to the TRAFAC class OBG-HflX-like GTPase superfamily. OBG GTPase family. In terms of assembly, monomer. Requires Mg(2+) as cofactor.

It is found in the cytoplasm. Its function is as follows. An essential GTPase which binds GTP, GDP and possibly (p)ppGpp with moderate affinity, with high nucleotide exchange rates and a fairly low GTP hydrolysis rate. Plays a role in control of the cell cycle, stress response, ribosome biogenesis and in those bacteria that undergo differentiation, in morphogenesis control. The protein is GTPase Obg of Ehrlichia chaffeensis (strain ATCC CRL-10679 / Arkansas).